A 271-amino-acid chain; its full sequence is MSENKQEVHPDTITDVEAVIDTEEELIKECEEMWKDMEDCQNKLSLIGTETLTNADAQLSLLIMQMKCLTAELGQWKKRKPEIIPLNEDVLLTLGKEEFQKLRCDLEMVLSTIQSKNEKLKEDLEREQQWLDEQQQILDTLNVLNSDVENQVVTLTESRIFNELTTKIRGIKEFKEKLLLTLGAFLDNHFPLPEASTPKKRKNIQDSNAQLITLNEILEMLINRMFDVPHDPYVKIRDSFWPPYIELLLRYGIALRHPEDPSQIRLEAFHQ.

2 coiled-coil regions span residues 11 to 44 (DTITDVEAVIDTEEELIKECEEMWKDMEDCQNKL) and 102 to 151 (LRCD…VENQ).

The protein belongs to the CENP-K/MCM22 family. Component of the CENPA-CAD complex, composed of CENPI, CENPK, CENPL, CENPO, CENPP, CENPQ, CENPR and CENPS. The CENPA-CAD complex interacts with the CENPA-NAC complex, at least composed of CENPA, CENPC, CENPH, CENPM, CENPN, CENPT and CENPU. May interact with Sox6. In terms of tissue distribution, highly expressed in testis.

The protein localises to the nucleus. Its subcellular location is the chromosome. The protein resides in the centromere. It is found in the kinetochore. Its function is as follows. Component of the CENPA-CAD (nucleosome distal) complex, a complex recruited to centromeres which is involved in assembly of kinetochore proteins, mitotic progression and chromosome segregation. May be involved in incorporation of newly synthesized CENPA into centromeres via its interaction with the CENPA-NAC complex. Acts in coordination with KNL1 to recruit the NDC80 complex to the outer kinetochore. The chain is Centromere protein K (Cenpk) from Mus musculus (Mouse).